The primary structure comprises 161 residues: Crossover junction endodeoxyribonuclease RuvC (161 aa).

Catalysis depends on residues aspartate 9, glutamate 69, and histidine 144. 3 residues coordinate Mg(2+): aspartate 9, glutamate 69, and histidine 144.

Belongs to the RuvC family. Homodimer which binds Holliday junction (HJ) DNA. The HJ becomes 2-fold symmetrical on binding to RuvC with unstacked arms; it has a different conformation from HJ DNA in complex with RuvA. In the full resolvosome a probable DNA-RuvA(4)-RuvB(12)-RuvC(2) complex forms which resolves the HJ. Mg(2+) serves as cofactor.

The protein resides in the cytoplasm. It catalyses the reaction Endonucleolytic cleavage at a junction such as a reciprocal single-stranded crossover between two homologous DNA duplexes (Holliday junction).. The RuvA-RuvB-RuvC complex processes Holliday junction (HJ) DNA during genetic recombination and DNA repair. Endonuclease that resolves HJ intermediates. Cleaves cruciform DNA by making single-stranded nicks across the HJ at symmetrical positions within the homologous arms, yielding a 5'-phosphate and a 3'-hydroxyl group; requires a central core of homology in the junction. The consensus cleavage sequence is 5'-(A/T)TT(C/G)-3'. Cleavage occurs on the 3'-side of the TT dinucleotide at the point of strand exchange. HJ branch migration catalyzed by RuvA-RuvB allows RuvC to scan DNA until it finds its consensus sequence, where it cleaves and resolves the cruciform DNA. The polypeptide is Crossover junction endodeoxyribonuclease RuvC (Borrelia turicatae (strain 91E135)).